Here is a 995-residue protein sequence, read N- to C-terminus: Aconitate hydratase 2, mitochondrial (995 aa).

Residues 1–83 constitute a mitochondrion transit peptide; it reads MYRRATSGVR…PASLRAQARN (83 aa). Substrate contacts are provided by residues glutamine 187 and 306–308; that span reads DSH. [4Fe-4S] cluster contacts are provided by cysteine 538, cysteine 604, and cysteine 607. Substrate is bound by residues arginine 637, arginine 642, arginine 800, and 881-882; that span reads SR.

This sequence belongs to the aconitase/IPM isomerase family. As to quaternary structure, monomer. [4Fe-4S] cluster is required as a cofactor. As to expression, mostly expressed in roots, leaves and flowers, also present in stems, and, at low levels, in seeds.

It is found in the mitochondrion. It carries out the reaction citrate = D-threo-isocitrate. The protein operates within carbohydrate metabolism; tricarboxylic acid cycle; isocitrate from oxaloacetate: step 2/2. Its function is as follows. Catalyzes the isomerization of citrate to isocitrate via cis-aconitate. Contributes to oxidative stress tolerance. Involved in acetate assimilation. The protein is Aconitate hydratase 2, mitochondrial of Arabidopsis thaliana (Mouse-ear cress).